We begin with the raw amino-acid sequence, 355 residues long: NADH-quinone oxidoreductase subunit H (355 aa).

8 consecutive transmembrane segments (helical) span residues 25-45 (VVRI…LILW), 91-111 (WLYL…WAVI), 126-146 (LLYA…AGWA), 170-190 (MGFA…SEIV), 205-225 (FLSW…ISGI), 253-273 (MAFA…SALA), 290-310 (FIPG…VFIW), and 330-350 (VFLP…MSPL).

The protein belongs to the complex I subunit 1 family. As to quaternary structure, NDH-1 is composed of 14 different subunits. Subunits NuoA, H, J, K, L, M, N constitute the membrane sector of the complex.

It localises to the cell inner membrane. The enzyme catalyses a quinone + NADH + 5 H(+)(in) = a quinol + NAD(+) + 4 H(+)(out). In terms of biological role, NDH-1 shuttles electrons from NADH, via FMN and iron-sulfur (Fe-S) centers, to quinones in the respiratory chain. The immediate electron acceptor for the enzyme in this species is believed to be ubiquinone. Couples the redox reaction to proton translocation (for every two electrons transferred, four hydrogen ions are translocated across the cytoplasmic membrane), and thus conserves the redox energy in a proton gradient. This subunit may bind ubiquinone. In Burkholderia cenocepacia (strain HI2424), this protein is NADH-quinone oxidoreductase subunit H.